The chain runs to 81 residues: Photosystem I iron-sulfur center (81 aa).

4Fe-4S ferredoxin-type domains lie at 2-31 (SHTV…MVPW) and 37-68 (GQIA…VRVY). [4Fe-4S] cluster is bound by residues Cys11, Cys14, Cys17, Cys21, Cys48, Cys51, Cys54, and Cys58.

As to quaternary structure, the eukaryotic PSI reaction center is composed of at least 11 subunits. [4Fe-4S] cluster is required as a cofactor.

The protein resides in the plastid. The protein localises to the chloroplast thylakoid membrane. The enzyme catalyses reduced [plastocyanin] + hnu + oxidized [2Fe-2S]-[ferredoxin] = oxidized [plastocyanin] + reduced [2Fe-2S]-[ferredoxin]. Functionally, apoprotein for the two 4Fe-4S centers FA and FB of photosystem I (PSI); essential for photochemical activity. FB is the terminal electron acceptor of PSI, donating electrons to ferredoxin. The C-terminus interacts with PsaA/B/D and helps assemble the protein into the PSI complex. Required for binding of PsaD and PsaE to PSI. PSI is a plastocyanin/cytochrome c6-ferredoxin oxidoreductase, converting photonic excitation into a charge separation, which transfers an electron from the donor P700 chlorophyll pair to the spectroscopically characterized acceptors A0, A1, FX, FA and FB in turn. The polypeptide is Photosystem I iron-sulfur center (Thalassiosira pseudonana (Marine diatom)).